The chain runs to 303 residues: Fe-S cluster assembly protein DRE2 (303 aa).

Positions 1–125 (MTHSRTALVL…WQKRAVTASA (125 aa)) are N-terminal SAM-like domain. The tract at residues 126 to 188 (PVKLAPRQPV…GDAPIAENDL (63 aa)) is linker. Positions 202, 213, 216, and 218 each coordinate [2Fe-2S] cluster. A fe-S binding site A region spans residues 202–218 (CGRTQTRRRKACKDCTC). [4Fe-4S] cluster-binding residues include Cys266, Cys269, Cys277, and Cys280. Short sequence motifs (cx2C motif) lie at residues 266–269 (CGSC) and 277–280 (CSGC). Positions 266 to 280 (CGSCSLGDAFRCSGC) are fe-S binding site B.

The protein belongs to the anamorsin family. Monomer. Interacts with TAH18. Interacts with MIA40. [2Fe-2S] cluster serves as cofactor. It depends on [4Fe-4S] cluster as a cofactor.

Its subcellular location is the cytoplasm. It localises to the mitochondrion intermembrane space. Component of the cytosolic iron-sulfur (Fe-S) protein assembly (CIA) machinery required for the maturation of extramitochondrial Fe-S proteins. Part of an electron transfer chain functioning in an early step of cytosolic Fe-S biogenesis, facilitating the de novo assembly of a [4Fe-4S] cluster on the scaffold complex CFD1-NBP35. Electrons are transferred to DRE2 from NADPH via the FAD- and FMN-containing protein TAH18. TAH18-DRE2 are also required for the assembly of the diferric tyrosyl radical cofactor of ribonucleotide reductase (RNR), probably by providing electrons for reduction during radical cofactor maturation in the catalytic small subunit RNR2. In Eremothecium gossypii (strain ATCC 10895 / CBS 109.51 / FGSC 9923 / NRRL Y-1056) (Yeast), this protein is Fe-S cluster assembly protein DRE2.